A 398-amino-acid chain; its full sequence is uncharacterized protein (398 aa).

Lysine 212 carries the N6-(pyridoxal phosphate)lysine modification.

Belongs to the trans-sulfuration enzymes family. The cofactor is pyridoxal 5'-phosphate.

This is an uncharacterized protein from Schizosaccharomyces pombe (strain 972 / ATCC 24843) (Fission yeast).